Reading from the N-terminus, the 946-residue chain is Bifunctional glutamine synthetase adenylyltransferase/adenylyl-removing enzyme (946 aa).

An adenylyl removase region spans residues 1 to 440; it reads MKPLSSPLQQ…VFNELIGDDE (440 aa). Residues 449–946 form an adenylyl transferase region; that stretch reads SEQWRELWQD…ASWQKWLVEE (498 aa).

This sequence belongs to the GlnE family. Requires Mg(2+) as cofactor.

It carries out the reaction [glutamine synthetase]-O(4)-(5'-adenylyl)-L-tyrosine + phosphate = [glutamine synthetase]-L-tyrosine + ADP. The catalysed reaction is [glutamine synthetase]-L-tyrosine + ATP = [glutamine synthetase]-O(4)-(5'-adenylyl)-L-tyrosine + diphosphate. Involved in the regulation of glutamine synthetase GlnA, a key enzyme in the process to assimilate ammonia. When cellular nitrogen levels are high, the C-terminal adenylyl transferase (AT) inactivates GlnA by covalent transfer of an adenylyl group from ATP to specific tyrosine residue of GlnA, thus reducing its activity. Conversely, when nitrogen levels are low, the N-terminal adenylyl removase (AR) activates GlnA by removing the adenylyl group by phosphorolysis, increasing its activity. The regulatory region of GlnE binds the signal transduction protein PII (GlnB) which indicates the nitrogen status of the cell. The polypeptide is Bifunctional glutamine synthetase adenylyltransferase/adenylyl-removing enzyme (Escherichia coli O7:K1 (strain IAI39 / ExPEC)).